The following is a 470-amino-acid chain: Argininosuccinate lyase (470 aa).

Belongs to the lyase 1 family. Argininosuccinate lyase subfamily.

It localises to the cytoplasm. It catalyses the reaction 2-(N(omega)-L-arginino)succinate = fumarate + L-arginine. It participates in amino-acid biosynthesis; L-arginine biosynthesis; L-arginine from L-ornithine and carbamoyl phosphate: step 3/3. The chain is Argininosuccinate lyase from Synechococcus sp. (strain WH7803).